The chain runs to 492 residues: Probable cytosol aminopeptidase (492 aa).

Residues Lys262 and Asp267 each coordinate Mn(2+). Residue Lys274 is part of the active site. Positions 286, 345, and 347 each coordinate Mn(2+). The active site involves Arg349.

It belongs to the peptidase M17 family. The cofactor is Mn(2+).

Its subcellular location is the cytoplasm. It catalyses the reaction Release of an N-terminal amino acid, Xaa-|-Yaa-, in which Xaa is preferably Leu, but may be other amino acids including Pro although not Arg or Lys, and Yaa may be Pro. Amino acid amides and methyl esters are also readily hydrolyzed, but rates on arylamides are exceedingly low.. The enzyme catalyses Release of an N-terminal amino acid, preferentially leucine, but not glutamic or aspartic acids.. Its function is as follows. Presumably involved in the processing and regular turnover of intracellular proteins. Catalyzes the removal of unsubstituted N-terminal amino acids from various peptides. In Acaryochloris marina (strain MBIC 11017), this protein is Probable cytosol aminopeptidase.